The sequence spans 952 residues: Histone deacetylase 7 (952 aa).

Transcription repression stretches follow at residues Met1–Arg268 and Gly218–Gly546. The segment at Ser49–Pro149 is interaction with MEF2A. Phosphoserine is present on Ser109. 2 disordered regions span residues Leu130 to Gly224 and Pro261 to Ser283. A Phosphoserine; by MARK2, MARK3 and PKD/PRKD1 modification is found at Ser155. The segment covering Lys167–Ser181 has biased composition (basic and acidic residues). The residue at position 181 (Ser181) is a Phosphoserine; by PKD/PRKD2. Residues Ser197–Pro212 show a composition bias toward low complexity. Ser283 carries the phosphoserine modification. Position 286 is a phosphothreonine (Thr286). Disordered stretches follow at residues Leu349–Arg377, Lys389–Pro441, and Leu460–Glu510. The residue at position 358 (Ser358) is a Phosphoserine; by PKD/PRKD1. The span at Pro360 to Met374 shows a compositional bias: pro residues. Ser364, Ser405, Ser486, Ser487, and Ser507 each carry phosphoserine. The span at Ser482–Ala503 shows a compositional bias: low complexity. The segment at Pro512–Asp865 is histone deacetylase. Cys533, Cys535, and His541 together coordinate Zn(2+). Ser595 is modified (phosphoserine). Zn(2+) is bound at residue Cys618. The active site involves His670. The segment at Asn877–Leu952 is interaction with SIN3A. Positions Lys917–Leu952 match the Nuclear export signal motif.

Belongs to the histone deacetylase family. HD type 2 subfamily. As to quaternary structure, interacts with HDAC1, HDAC2, HDAC3, HDAC4, HDAC5, NCOR1, NCOR2, SIN3A, SIN3B, RBBP4, RBBP7, MTA1L1, SAP30 and MBD3. Interacts with KAT5 and EDNRA. Interacts with the 14-3-3 protein YWHAE, MEF2A, MEF2B and MEF2C. Interacts with ZMYND15. Interacts with KDM5B. Interacts with PML. Interacts with FOXP3. Interacts with RARA. In terms of processing, may be phosphorylated by CaMK1. Phosphorylated by the PKC kinases PKN1 and PKN2, impairing nuclear import. Phosphorylation at Ser-155 by MARK2, MARK3 and PRKD1 promotes interaction with 14-3-3 proteins and export from the nucleus. Phosphorylation at Ser-155 is a prerequisite for phosphorylation at Ser-181.

Its subcellular location is the nucleus. It is found in the cytoplasm. It catalyses the reaction N(6)-acetyl-L-lysyl-[histone] + H2O = L-lysyl-[histone] + acetate. The enzyme catalyses N(6)-acetyl-L-lysyl-[protein] + H2O = L-lysyl-[protein] + acetate. Responsible for the deacetylation of lysine residues on the N-terminal part of the core histones (H2A, H2B, H3 and H4). Histone deacetylation gives a tag for epigenetic repression and plays an important role in transcriptional regulation, cell cycle progression and developmental events. Histone deacetylases act via the formation of large multiprotein complexes. Involved in muscle maturation by repressing transcription of myocyte enhancer factors such as MEF2A, MEF2B and MEF2C. During muscle differentiation, it shuttles into the cytoplasm, allowing the expression of myocyte enhancer factors. May be involved in Epstein-Barr virus (EBV) latency, possibly by repressing the viral BZLF1 gene. Positively regulates the transcriptional repressor activity of FOXP3. Serves as a corepressor of RARA, causing its deacetylation and inhibition of RARE DNA element binding. In association with RARA, plays a role in the repression of microRNA-10a and thereby in the inflammatory response. Also acetylates non-histone proteins, such as ALKBH5. This is Histone deacetylase 7 (HDAC7) from Homo sapiens (Human).